The following is a 348-amino-acid chain: Putative serine/threonine-protein phosphatase C26H8.05c (348 aa).

The Mn(2+) site is built by Asp53, His55, Asp81, and Asn113. Residue His114 is the Proton donor of the active site. 2 residues coordinate Mn(2+): His163 and His237. The tract at residues 259 to 282 (TNEEDSELDSDSASPVDDSPAPGD) is disordered. Over residues 269–280 (DSASPVDDSPAP) the composition is skewed to low complexity. Ser272 is modified (phosphoserine). Residue Leu348 is modified to Leucine methyl ester.

It belongs to the PPP phosphatase family. PP-1 subfamily. Requires Mn(2+) as cofactor.

The protein resides in the cytoplasm. It is found in the nucleus. The catalysed reaction is O-phospho-L-seryl-[protein] + H2O = L-seryl-[protein] + phosphate. The enzyme catalyses O-phospho-L-threonyl-[protein] + H2O = L-threonyl-[protein] + phosphate. In Schizosaccharomyces pombe (strain 972 / ATCC 24843) (Fission yeast), this protein is Putative serine/threonine-protein phosphatase C26H8.05c.